Reading from the N-terminus, the 166-residue chain is Ribonuclease H (166 aa).

The RNase H type-1 domain maps to K10–S151. Residues D19, E57, D79, and D143 each contribute to the Mg(2+) site. Residues L145–K157 show a composition bias toward basic and acidic residues. A disordered region spans residues L145–L166.

Belongs to the RNase H family. As to quaternary structure, monomer. Requires Mg(2+) as cofactor.

Its subcellular location is the cytoplasm. It carries out the reaction Endonucleolytic cleavage to 5'-phosphomonoester.. Its function is as follows. Endonuclease that specifically degrades the RNA of RNA-DNA hybrids. The chain is Ribonuclease H from Rhodospirillum rubrum (strain ATCC 11170 / ATH 1.1.1 / DSM 467 / LMG 4362 / NCIMB 8255 / S1).